The primary structure comprises 690 residues: Eukaryotic translation initiation factor 3 subunit B (690 aa).

The segment covering 1–11 has biased composition (basic and acidic residues); it reads MAKKKSEEHSG. A disordered region spans residues 1–33; sequence MAKKKSEEHSGTDANDSDYQEEPNFDDPPGFVD. Residues 15–25 are compositionally biased toward acidic residues; the sequence is NDSDYQEEPNF. In terms of domain architecture, RRM spans 57–141; it reads SVVVVDNIPK…HTFAVNLFTD (85 aa). 5 WD repeats span residues 207-246, 293-331, 334-369, 442-484, and 530-575; these read TRER…KIQK, DGMS…LLDL, IKIP…TLME, EIRE…KPSL, and PDHF…IKRT. Residues 595 to 645 are a coiled coil; sequence EEKQKEIKKNLKKYYAAFEQKDRLRLTRASKELLEKRSQLRETFMEYRNKR.

The protein belongs to the eIF-3 subunit B family. As to quaternary structure, component of the eukaryotic translation initiation factor 3 (eIF-3) complex. The eIF-3 complex interacts with pix. Interacts with mxt.

Its subcellular location is the cytoplasm. Its function is as follows. RNA-binding component of the eukaryotic translation initiation factor 3 (eIF-3) complex, which is involved in protein synthesis of a specialized repertoire of mRNAs and, together with other initiation factors, stimulates binding of mRNA and methionyl-tRNAi to the 40S ribosome. The eIF-3 complex specifically targets and initiates translation of a subset of mRNAs involved in cell proliferation. The polypeptide is Eukaryotic translation initiation factor 3 subunit B (Drosophila melanogaster (Fruit fly)).